Consider the following 315-residue polypeptide: METWVNQSYTDGFFLLGIFSHSTADLVLFSVVMAVFTVALCGNVLLIFLIYMDPHLHTPMYFFLSQLSLMDLMLVCTNVPKMAANFLSGRKSISFVGCGIQIGLFVCLVGSEGLLLGLMAYDRYVAISHPLHYPILMNQRVCLQITGSSWAFGIIDGLIQMVVVMNFPYCGLRKVNHFFCEMLSLLKLACVDTSLFEKVIFACCVFMLLFPFSIIVASYAHILGTVLQMHSAQAWKKALATCSSHLTAVTLFYGAAMFIYLRPRHYRAPSHDKVASIFYTVLTPMLNPLIYSLRNREVMGALRKGLDRCRIGSQH.

Residues 1 to 26 (METWVNQSYTDGFFLLGIFSHSTADL) lie on the Extracellular side of the membrane. A glycan (N-linked (GlcNAc...) asparagine) is linked at Asn-6. A helical transmembrane segment spans residues 27-50 (VLFSVVMAVFTVALCGNVLLIFLI). Residues 51–58 (YMDPHLHT) lie on the Cytoplasmic side of the membrane. A helical membrane pass occupies residues 59–80 (PMYFFLSQLSLMDLMLVCTNVP). At 81–101 (KMAANFLSGRKSISFVGCGIQ) the chain is on the extracellular side. A disulfide bond links Cys-98 and Cys-190. Residues 102–121 (IGLFVCLVGSEGLLLGLMAY) form a helical membrane-spanning segment. Topologically, residues 122–140 (DRYVAISHPLHYPILMNQR) are cytoplasmic. Residues 141–159 (VCLQITGSSWAFGIIDGLI) traverse the membrane as a helical segment. Over 160-196 (QMVVVMNFPYCGLRKVNHFFCEMLSLLKLACVDTSLF) the chain is Extracellular. Residues 197–220 (EKVIFACCVFMLLFPFSIIVASYA) traverse the membrane as a helical segment. The Cytoplasmic segment spans residues 221–237 (HILGTVLQMHSAQAWKK). The helical transmembrane segment at 238–260 (ALATCSSHLTAVTLFYGAAMFIY) threads the bilayer. At 261–273 (LRPRHYRAPSHDK) the chain is on the extracellular side. The helical transmembrane segment at 274–293 (VASIFYTVLTPMLNPLIYSL) threads the bilayer. The Cytoplasmic segment spans residues 294–315 (RNREVMGALRKGLDRCRIGSQH).

Belongs to the G-protein coupled receptor 1 family.

It is found in the cell membrane. Odorant receptor. The protein is Olfactory receptor 2V2 (OR2V2) of Homo sapiens (Human).